Consider the following 245-residue polypeptide: tRNA (guanine-N(1)-)-methyltransferase (245 aa).

Residues Gly-113 and Ile-133–Leu-138 each bind S-adenosyl-L-methionine.

Belongs to the RNA methyltransferase TrmD family. In terms of assembly, homodimer.

Its subcellular location is the cytoplasm. The enzyme catalyses guanosine(37) in tRNA + S-adenosyl-L-methionine = N(1)-methylguanosine(37) in tRNA + S-adenosyl-L-homocysteine + H(+). In terms of biological role, specifically methylates guanosine-37 in various tRNAs. This is tRNA (guanine-N(1)-)-methyltransferase from Anoxybacillus flavithermus (strain DSM 21510 / WK1).